A 1235-amino-acid polypeptide reads, in one-letter code: Gem-associated protein 5 (1235 aa).

The WD 1 repeat unit spans residues 55-102; the sequence is STRINILALDVSPMWGLGNGGPTKPFAIVGDDLSVQVWDCALGEAVIG. The interval 227 to 263 is disordered; sequence NNLALSAEEWRSRNGGQEEKPKTKPPPLTKSKAAESD. Positions 234 to 248 are enriched in basic and acidic residues; that stretch reads EEWRSRNGGQEEKPK. Residues S289, S290, S351, and S354 each carry the phosphoserine modification. The disordered stretch occupies residues 340–368; the sequence is DCEPTKPTGPLSDASTISNKNDASDSTEG. Over residues 352-368 the composition is skewed to polar residues; that stretch reads DASTISNKNDASDSTEG. Phosphothreonine is present on T355. S357 is subject to Phosphoserine. At T411 the chain carries Phosphothreonine. WD repeat units follow at residues 428–469, 475–512, 565–605, 611–650, 690–730, 739–779, and 788–828; these read ISAE…HAGK, KTAGKLNNVYWLNNHVIVSLSRHQLFFWSVEFERKMLR, TVAF…TSCL, YVSSNVYCLAWSPNCLELAFGTFDGTVGILDVERMKVKTH, TIVN…EKSW, LFAR…RNWK, and TEKA…KPPL. The LXXLL motif signature appears at 443 to 447; that stretch reads LETLL. Residues 963 to 980 show a composition bias toward basic and acidic residues; the sequence is KEQNNRSAKECPKCKEQS. A disordered region spans residues 963–983; the sequence is KEQNNRSAKECPKCKEQSPDS.

As to quaternary structure, component of the core survival motor neuron (SMN) complex composed of Smn, Gem2, Gem3, rig/Gem5 and one of 3 almost identical Gem4 paralogs encoded by Glos/Gem4a, Gem4b or Gem4c. Interacts with nuclear receptors EcR, svp (seven up), usp (ultraspiracle), Hr39 and Hr3. Expressed in the brain and salivary glands of early and late second instar larvae. Expressed in nurse cells and oocytes.

The protein localises to the nucleus. The protein resides in the cytoplasm. Its subcellular location is the U-body. It is found in the gem. Functionally, component of the survival motor neuron (SMN) complex that catalyzes the assembly of small nuclear ribonucleoproteins (snRNPs), the building blocks of the spliceosome, and thereby plays an important role in the splicing of cellular pre-mRNAs. Nuclear receptor cofactor for the ecdysone-regulated processes of molting and puparium formation. Acts downstream from ecdysone biosynthesis and release to control the expression of specific ecdysone-regulated genes such as Eip74EF (E74). Essential in muscle and neuronal tissues for motor function, including climbing ability and flight. The sequence is that of Gem-associated protein 5 from Drosophila melanogaster (Fruit fly).